The following is a 189-amino-acid chain: UPF0232 protein MLBr00004 (189 aa).

The segment at 59-78 is disordered; sequence TDRRRNWSGPGPDVRDPQPL.

It belongs to the UPF0232 family.

This chain is UPF0232 protein MLBr00004, found in Mycobacterium leprae (strain Br4923).